The chain runs to 342 residues: Glycerol-1-phosphate dehydrogenase [NAD(P)+] (342 aa).

Residues 84–88 (GRPID) and 106–109 (TAAS) each bind NAD(+). A substrate-binding site is contributed by D111. Residue S115 coordinates NAD(+). Substrate is bound at residue D160. Positions 160 and 241 each coordinate Zn(2+). Residue H245 participates in substrate binding. H260 lines the Zn(2+) pocket.

This sequence belongs to the glycerol-1-phosphate dehydrogenase family. In terms of assembly, homodimer. It depends on Zn(2+) as a cofactor.

Its subcellular location is the cytoplasm. The enzyme catalyses sn-glycerol 1-phosphate + NAD(+) = dihydroxyacetone phosphate + NADH + H(+). It catalyses the reaction sn-glycerol 1-phosphate + NADP(+) = dihydroxyacetone phosphate + NADPH + H(+). Its pathway is membrane lipid metabolism; glycerophospholipid metabolism. In terms of biological role, catalyzes the NAD(P)H-dependent reduction of dihydroxyacetonephosphate (DHAP or glycerone phosphate) to glycerol 1-phosphate (G1P). The G1P thus generated is used as the glycerophosphate backbone of phospholipids in the cellular membranes of Archaea. The polypeptide is Glycerol-1-phosphate dehydrogenase [NAD(P)+] (Pyrobaculum aerophilum (strain ATCC 51768 / DSM 7523 / JCM 9630 / CIP 104966 / NBRC 100827 / IM2)).